A 232-amino-acid polypeptide reads, in one-letter code: Fibrillarin-like rRNA/tRNA 2'-O-methyltransferase (232 aa).

S-adenosyl-L-methionine contacts are provided by residues 89–90, 108–109, 133–134, and 153–156; these read TT, EF, DA, and DIAQ.

Belongs to the methyltransferase superfamily. Fibrillarin family. Interacts with nop5. Component of box C/D small ribonucleoprotein (sRNP) particles that contain rpl7ae, FlpA and nop5, plus a guide RNA.

In terms of biological role, involved in pre-rRNA and tRNA processing. Utilizes the methyl donor S-adenosyl-L-methionine to catalyze the site-specific 2'-hydroxyl methylation of ribose moieties in rRNA and tRNA. Site specificity is provided by a guide RNA that base pairs with the substrate. Methylation occurs at a characteristic distance from the sequence involved in base pairing with the guide RNA. This Saccharolobus islandicus (strain M.16.27) (Sulfolobus islandicus) protein is Fibrillarin-like rRNA/tRNA 2'-O-methyltransferase.